Reading from the N-terminus, the 472-residue chain is Eukaryotic translation initiation factor 2 subunit 3 (472 aa).

An N-acetylalanine modification is found at alanine 2. Serine 16 is subject to Phosphoserine. The 210-residue stretch at 39 to 248 (QATINIGTIG…IVKKIPVPPR (210 aa)) folds into the tr-type G domain. The tract at residues 48–55 (GHVAHGKS) is G1. A GTP-binding site is contributed by 51 to 56 (AHGKST). A G2 region spans residues 76–80 (NITIK). Residues 134–137 (DCPG) form a G3 region. GTP-binding positions include 190–193 (NKID) and 225–227 (SAQ). Residues 190 to 193 (NKID) form a G4 region. Positions 225 to 227 (SAQ) are G5. The segment at 457-469 (GQIRRGVTIKPTV) is interacts with CDC123.

This sequence belongs to the TRAFAC class translation factor GTPase superfamily. Classic translation factor GTPase family. EIF2G subfamily. Eukaryotic translation initiation factor 2 eIF2 is a heterotrimeric complex composed of an alpha (EIF2S1), a beta (EIF2S2) and a gamma (EIF2S3) chain. eIF2 is member of the 43S pre-initiation complex (43S PIC). Interacts (via C-terminus) with CDC123; the interaction is direct.

The protein resides in the cytoplasm. The protein localises to the cytosol. It catalyses the reaction GTP + H2O = GDP + phosphate + H(+). Functionally, member of the eIF2 complex that functions in the early steps of protein synthesis by forming a ternary complex with GTP and initiator tRNA. This complex binds to a 40S ribosomal subunit, followed by mRNA binding to form the 43S pre-initiation complex (43S PIC). Junction of the 60S ribosomal subunit to form the 80S initiation complex is preceded by hydrolysis of the GTP bound to eIF2 and release of an eIF2-GDP binary complex. In order for eIF2 to recycle and catalyze another round of initiation, the GDP bound to eIF2 must exchange with GTP by way of a reaction catalyzed by eIF-2B. The protein is Eukaryotic translation initiation factor 2 subunit 3 (EIF2S3) of Pongo abelii (Sumatran orangutan).